We begin with the raw amino-acid sequence, 441 residues long: Ankyrin repeat and MYND domain-containing protein 2 (441 aa).

ANK repeat units lie at residues 45-74 (NGMT…DVNC), 79-108 (HGYT…ETDV), and 159-188 (KLAG…NPLL). Cys-320, Cys-323, Cys-332, Cys-335, Cys-341, Cys-345, His-353, and Cys-357 together coordinate Zn(2+). The segment at 320 to 357 (CTTCGEKGASKRCSVCKMVIYCDQTCQKTHWFTHKKIC) adopts an MYND-type zinc-finger fold. Residues 374–384 (EKRQEENHGKL) show a composition bias toward basic and acidic residues. The tract at residues 374 to 441 (EKRQEENHGK…APAGPQVSEE (68 aa)) is disordered.

In terms of assembly, interacts with the retinal-specific guanylyl cyclase GC1.

It is found in the cell projection. The protein resides in the cilium. Functionally, may be involved in the trafficking of signaling proteins to the cilia. The chain is Ankyrin repeat and MYND domain-containing protein 2 (ANKMY2) from Homo sapiens (Human).